A 119-amino-acid polypeptide reads, in one-letter code: Large ribosomal subunit protein bL20 (119 aa).

This sequence belongs to the bacterial ribosomal protein bL20 family.

Functionally, binds directly to 23S ribosomal RNA and is necessary for the in vitro assembly process of the 50S ribosomal subunit. It is not involved in the protein synthesizing functions of that subunit. In Stenotrophomonas maltophilia (strain K279a), this protein is Large ribosomal subunit protein bL20.